Consider the following 425-residue polypeptide: 2-methylserine hydroxymethyltransferase (425 aa).

(6S)-5,6,7,8-tetrahydrofolate is bound by residues leucine 126 and glycine 130–leucine 132. Lysine 235 carries the N6-(pyridoxal phosphate)lysine modification. Glutamate 251 contacts (6S)-5,6,7,8-tetrahydrofolate.

It belongs to the SHMT family. Homodimer. Pyridoxal 5'-phosphate is required as a cofactor.

Its subcellular location is the cytoplasm. It carries out the reaction (6R)-5,10-methylene-5,6,7,8-tetrahydrofolate + D-alanine + H2O = 2-methylserine + (6S)-5,6,7,8-tetrahydrofolate. It functions in the pathway one-carbon metabolism; tetrahydrofolate interconversion. In terms of biological role, catalyzes the reversible interconversion of alpha-methyl-L-serine to D-alanine with tetrahydrofolate (THF) serving as the one-carbon carrier. Cannot use alpha-methyl-D-serine, L-serine, D-serine or L-alanine. The chain is 2-methylserine hydroxymethyltransferase from Ensifer sp.